Here is a 250-residue protein sequence, read N- to C-terminus: Small ribosomal subunit protein uS3 (250 aa).

The region spanning 39-111 is the KH type-2 domain; it reads IRPLIKNHYP…KVQINIFEVK (73 aa).

The protein belongs to the universal ribosomal protein uS3 family. In terms of assembly, part of the 30S ribosomal subunit. Forms a tight complex with proteins S10 and S14.

Functionally, binds the lower part of the 30S subunit head. Binds mRNA in the 70S ribosome, positioning it for translation. The protein is Small ribosomal subunit protein uS3 of Ziziphus jujuba witches'-broom phytoplasma.